Reading from the N-terminus, the 118-residue chain is Elongin-B (118 aa).

Met-1 bears the N-acetylmethionine mark. Residues 1 to 66 form the Ubiquitin-like domain; sequence MDVFLMIRRH…LGECGFTSQT (66 aa). A Phosphothreonine modification is found at Thr-84. The disordered stretch occupies residues 92-118; the sequence is PFSSPPELPDVMKPQDSGSSANEQAVQ. Residues 107–118 show a composition bias toward polar residues; that stretch reads DSGSSANEQAVQ. Ser-108 and Ser-111 each carry phosphoserine.

It belongs to the Elongin B family. As to quaternary structure, heterotrimer of an A (ELOA, ELOA2 or ELOA3P), ELOB and ELOC subunit. The elongin BC complex interacts with EPOP; leading to recruit the elongin BC complex to Polycomb group (PcG) target genes, thereby restricting excessive activity of the PRC2/EED-EZH2 complex. Component of multiple cullin-RING E3 ubiquitin-protein ligase complexes composed of Elongin BC (ELOB and ELOC), a cullin (either CUL2 or CUL5), a catalytic subunit (either RBX1 or RNF7/RBX2), as well as a substrate adapter protein that can be either ASB2, ASB9, ASB11, KLHDC2, KLHDC3, KLHDC10, APPBP2, FEM1A, FEM1B, FEM1C, LRR1, PCMTD1, SOCS1, SOCS2, SOCS5, SPSB1, SPSB3, ELOA, VHL, WSB1 or RAB40C. As part of the Elongin BC E3 ubiquitin ligase complex; interacts with NRBP1. May also interact with DCUN1D1, DCUN1D2, DCUN1D3 and DCUN1D5. May form oligomers as a KLHDC2/KLHDC3-ELOB-ELOC complex; this interaction is autoinhibitory for the E3 ligase complex as the substrate-binding site of KLHDC2/KLHDC3 is blocked in the oligomer. In terms of assembly, (Microbial infection) Following infection by HIV-1 virus, component of a cullin-5-RING E3 ubiquitin-protein ligase complex (ECS complex) hijacked by the HIV-1 Vif protein. (Microbial infection) Substrate adapter protein can be a viral protein such as HIV Vif. As to quaternary structure, (Microbial infection) Interacts with molluscum contagiosum virus MC132. In terms of assembly, (Microbial infection) Interacts with herpes virus 8 virus protein LANA1.

It is found in the nucleus. It participates in protein modification; protein ubiquitination. SIII, also known as elongin, is a general transcription elongation factor that increases the RNA polymerase II transcription elongation past template-encoded arresting sites. Subunit A is transcriptionally active and its transcription activity is strongly enhanced by binding to the dimeric complex of the SIII regulatory subunits B and C (elongin BC complex). In embryonic stem cells, the elongin BC complex is recruited by EPOP to Polycomb group (PcG) target genes in order generate genomic region that display both active and repressive chromatin properties, an important feature of pluripotent stem cells. Its function is as follows. Core component of multiple cullin-2 and cullin-5-RING E3 ubiquitin-protein ligase complexes (ECS complexes), which mediate the ubiquitination of target proteins. By binding to BC-box motifs it seems to link target recruitment subunits, like VHL and members of the SOCS box family, to Cullin/RBX1 modules that activate E2 ubiquitination enzymes. Component the von Hippel-Lindau ubiquitination complex CBC(VHL). A number of ECS complexes (containing either KLHDC2, KLHDC3, KLHDC10, APPBP2, FEM1A, FEM1B or FEM1C as substrate-recognition component) are part of the DesCEND (destruction via C-end degrons) pathway, which recognizes a C-degron located at the extreme C terminus of target proteins, leading to their ubiquitination and degradation. The ECS(ASB9) complex mediates ubiquitination and degradation of CKB. As part of a multisubunit ubiquitin ligase complex, polyubiquitinates monoubiquitinated POLR2A. ECS(LRR1) ubiquitinates MCM7 and promotes CMG replisome disassembly by VCP and chromatin extraction during S-phase. As part of the ECS(RAB40C) complex, mediates ANKRD28 ubiquitination and degradation, thereby inhibiting protein phosphatase 6 (PP6) complex activity and focal adhesion assembly during cell migration. Functionally, (Microbial infection) Following infection by HIV-1 virus, component of a cullin-5-RING E3 ubiquitin-protein ligase complex (ECS complex) hijacked by the HIV-1 Vif protein, which catalyzes ubiquitination and degradation of APOBEC3F and APOBEC3G. The complex can also ubiquitinate APOBEC3H to some extent. The sequence is that of Elongin-B from Homo sapiens (Human).